The chain runs to 598 residues: MFS siderochrome iron transporter D (598 aa).

The disordered stretch occupies residues 1–34 (MLSSWQKKFFQTPEHPPAEGIAPPRDDGVPNPEP). Topologically, residues 1-76 (MLSSWQKKFF…AEAITLTWSK (76 aa)) are cytoplasmic. Residues 77–97 (ISLGAAYFLMWLLYLVNGFQA) form a helical membrane-spanning segment. Topologically, residues 98-115 (SITGNLSAYVTSGFESHS) are extracellular. N102 carries N-linked (GlcNAc...) asparagine glycosylation. The chain crosses the membrane as a helical span at residues 116–136 (LIPVISIVSSVMSAATYMPLA). Residues 137–144 (KVLNLWDR) are Cytoplasmic-facing. The helical transmembrane segment at 145-165 (SIGFIIMVAFATLGLILSATC) threads the bilayer. Residues 166–171 (HDIGTY) lie on the Extracellular side of the membrane. A helical transmembrane segment spans residues 172–192 (CAAQVFYSIGFAGIIFSVDVI). Residues 193 to 203 (TADTSTLRDRG) lie on the Cytoplasmic side of the membrane. The chain crosses the membrane as a helical span at residues 204-224 (LAYAFTSSPYIITAFGGPAAA). Residues 225–233 (EHFYDSNWR) are Extracellular-facing. Residues 234–254 (WAYGCFSIVLPVVALPMFCLL) form a helical membrane-spanning segment. The Cytoplasmic portion of the chain corresponds to 255–289 (RWNRHKAKKSGLLKDKADSGRTWMESIRHYIIEFD). The helical transmembrane segment at 290–310 (ILGVFFLAAGLVLFLLPFSIA) threads the bilayer. The Extracellular segment spans residues 311 to 318 (GSTEDDWK). A helical membrane pass occupies residues 319-339 (SASIITMLVIGFVCLLVFALV). At 340-341 (ER) the chain is on the cytoplasmic side. Residues 342-362 (FVAPVPFLPWALLASRTVLGA) traverse the membrane as a helical segment. Over 363 to 396 (CMLDVCYQIAYYCWFNYYTSYLQVVYGTSITTAG) the chain is Extracellular. A helical transmembrane segment spans residues 397 to 417 (YITSIFDVVSGVWLFIVGFLI). The Cytoplasmic segment spans residues 418–424 (KKTNRFR). A helical membrane pass occupies residues 425–445 (WLLFIAVPLYILGVGLMIYFR). The Extracellular portion of the chain corresponds to 446 to 450 (KPSWS). A helical membrane pass occupies residues 451–471 (VGYMIMCQIFIAFAGGTMIIC). The Cytoplasmic portion of the chain corresponds to 472 to 490 (QQVAVLAASDHDHAASSLA). Residues 491–511 (FLNVFGTMGSAVGSSISGAIW) traverse the membrane as a helical segment. Residues 512–562 (THTLPGALQRLLPDSVKADWQTIYDSLEEQLSYERGTLIRQAIALAYASTQ) lie on the Extracellular side of the membrane. A helical transmembrane segment spans residues 563–583 (SKMLIAGTAIMALSLVWMFVI). Topologically, residues 584–598 (RDIKLTKTQTKGVLF) are cytoplasmic.

This sequence belongs to the major facilitator superfamily.

The protein localises to the cell membrane. Functionally, major facilitator transporter involved in fusarinine C (FsC) uptake. In contrast to TAFC-mediated iron uptake, FsC-mediated iron uptake via mirD does not play a significant role during infection. This chain is MFS siderochrome iron transporter D, found in Aspergillus fumigatus (strain ATCC MYA-4609 / CBS 101355 / FGSC A1100 / Af293) (Neosartorya fumigata).